The chain runs to 205 residues: Protein TGAM_1450 (205 aa).

In terms of domain architecture, AMMECR1 spans 7–201 (EWGEFLVRLA…EEYPRGPVRR (195 aa)).

This is Protein TGAM_1450 from Thermococcus gammatolerans (strain DSM 15229 / JCM 11827 / EJ3).